A 421-amino-acid chain; its full sequence is Subtilisin-like protease 2 (421 aa).

The signal sequence occupies residues 1–16; it reads MQLLNFGLLLLPFVAG. Positions 17–122 are excised as a propeptide; it reads DLAPQPEPLL…VHPDQHVYLA (106 aa). Residues 36–122 enclose the Inhibitor I9 domain; that stretch reads QYIVTLKEGL…VHPDQHVYLA (87 aa). In terms of domain architecture, Peptidase S8 spans 131–421; that stretch reads RWGLGYMSSK…ERKFTLPKYF (291 aa). Catalysis depends on charge relay system residues D169 and H201. N-linked (GlcNAc...) asparagine glycosylation is found at N248, N261, and N348. Catalysis depends on S357, which acts as the Charge relay system. N388 is a glycosylation site (N-linked (GlcNAc...) asparagine).

This sequence belongs to the peptidase S8 family.

It localises to the secreted. Functionally, secreted subtilisin-like serine protease with keratinolytic activity that contributes to pathogenicity. This chain is Subtilisin-like protease 2 (SUB2), found in Trichophyton tonsurans (Scalp ringworm fungus).